A 252-amino-acid chain; its full sequence is 14-3-3-like protein GF14 omicron (252 aa).

Ser-65 and Ser-188 each carry phosphoserine.

It belongs to the 14-3-3 family.

It is found in the nucleus. It localises to the cytoplasm. Functionally, is associated with a DNA binding complex that binds to the G box, a well-characterized cis-acting DNA regulatory element found in plant genes. The chain is 14-3-3-like protein GF14 omicron (GRF11) from Arabidopsis thaliana (Mouse-ear cress).